The primary structure comprises 142 residues: gSG7 salivary protein (142 aa).

An N-terminal signal peptide occupies residues 1-25 (METKLVLALIACGVICLLQTTPTEA). 2 cysteine pairs are disulfide-bonded: C83–C138 and C106–C116.

In terms of assembly, interacts with host coagulation factor XII (F12) (inactive and activated). Interacts with host high molecular weight kininogen (KNG1) (inactive and activated).

Its subcellular location is the secreted. Its activity is regulated as follows. Zn(2+) modulates binding to host coagulation factor XII (F12) and high molecular weight kininogen (KNG1). Functionally, salivary protein with anticoagulant activity. Inhibits activation of host kallikrein-kinin system by preventing the reciprocal activation of coagulation factor XII (F12) and prekallikrein (KLKB1), and subsequent release of bradykinin. Inhibits host factor XII and high molecular weight kininogen (KNG1) binding to negatively charged surfaces. Weakly inhibits the alternative pathway of complement system activation in the host. This chain is gSG7 salivary protein, found in Anopheles stephensi (Indo-Pakistan malaria mosquito).